A 63-amino-acid chain; its full sequence is Small ribosomal subunit protein eS31 (63 aa).

Positions 31, 34, 50, and 53 each coordinate Zn(2+). Residues 31–53 (CPRCGSIMAHHMKPVERWACGKC) form a C4-type zinc finger.

The protein belongs to the eukaryotic ribosomal protein eS31 family. In terms of assembly, part of the 30S ribosomal subunit. Zn(2+) serves as cofactor.

This Sulfurisphaera tokodaii (strain DSM 16993 / JCM 10545 / NBRC 100140 / 7) (Sulfolobus tokodaii) protein is Small ribosomal subunit protein eS31.